The chain runs to 314 residues: Methionyl-tRNA formyltransferase (314 aa).

Residue 110 to 113 (SLLP) participates in (6S)-5,6,7,8-tetrahydrofolate binding.

Belongs to the Fmt family.

The enzyme catalyses L-methionyl-tRNA(fMet) + (6R)-10-formyltetrahydrofolate = N-formyl-L-methionyl-tRNA(fMet) + (6S)-5,6,7,8-tetrahydrofolate + H(+). In terms of biological role, attaches a formyl group to the free amino group of methionyl-tRNA(fMet). The formyl group appears to play a dual role in the initiator identity of N-formylmethionyl-tRNA by promoting its recognition by IF2 and preventing the misappropriation of this tRNA by the elongation apparatus. In Bacillus mycoides (strain KBAB4) (Bacillus weihenstephanensis), this protein is Methionyl-tRNA formyltransferase.